The primary structure comprises 191 residues: uncharacterized protein (191 aa).

Residues 87-184 (EFDSALIFHY…RIAITFRQMG (98 aa)) enclose the Fe2OG dioxygenase domain.

This is an uncharacterized protein from Acanthamoeba polyphaga mimivirus (APMV).